The following is a 360-amino-acid chain: Alpha-2-HS-glycoprotein (360 aa).

The first 15 residues, 1–15, serve as a signal peptide directing secretion; the sequence is LVLLLSLAQLWSCHL. In terms of domain architecture, Cystatin fetuin-A-type 1 spans 24 to 130; sequence YREHNCDDPE…QFTVLSAKCD (107 aa). 6 disulfides stabilise this stretch: cysteine 29–cysteine 351, cysteine 86–cysteine 97, cysteine 111–cysteine 129, cysteine 143–cysteine 146, cysteine 205–cysteine 216, and cysteine 227–cysteine 244. N-linked (GlcNAc...) asparagine glycosylation occurs at asparagine 96. Serine 131 is subject to Phosphoserine. Threonine 132 carries the post-translational modification Phosphothreonine. The residue at position 135 (serine 135) is a Phosphoserine. Residues 141–252 enclose the Cystatin fetuin-A-type 2 domain; that stretch reads KLCPDCPLLT…TCTIFPAQPV (112 aa). N-linked (GlcNAc...) asparagine glycosylation occurs at asparagine 153. Residues 260-285 are disordered; it reads VAGAAAVEPAPAVDPASPVSPPDGQS. Threonine 312 bears the Phosphothreonine mark. A phosphoserine mark is found at serine 318, serine 321, and serine 323.

It belongs to the fetuin family. In terms of processing, phosphorylated by FAM20C in the extracellular medium. In terms of tissue distribution, bone marrow.

It is found in the secreted. Its function is as follows. A cell adhesion protein that binds immature cells of the granulocyte lineage. The polypeptide is Alpha-2-HS-glycoprotein (AHSG) (Oryctolagus cuniculus (Rabbit)).